The chain runs to 197 residues: A-type ATP synthase subunit E (197 aa).

It belongs to the V-ATPase E subunit family. In terms of assembly, has multiple subunits with at least A(3), B(3), C, D, E, F, H, I and proteolipid K(x).

The protein resides in the cell membrane. Functionally, component of the A-type ATP synthase that produces ATP from ADP in the presence of a proton gradient across the membrane. The chain is A-type ATP synthase subunit E from Thermococcus gammatolerans (strain DSM 15229 / JCM 11827 / EJ3).